The chain runs to 439 residues: Coiled-coil domain-containing protein 166 (439 aa).

A disordered region spans residues 1–28; the sequence is MAPKKKRGPSAGSQPGGAAAAGAEQPLS. Residues 9–23 are compositionally biased toward low complexity; it reads PSAGSQPGGAAAAGA. Coiled-coil stretches lie at residues 27–74 and 121–213; these read LSER…EENR and DGVR…VRAL. The interval 276–439 is disordered; it reads PGGPPLWERP…AAAEASPGRA (164 aa). Residues 338 to 365 show a composition bias toward polar residues; it reads VLSSMDSRVPSLATSKVGSRMPSLTASR. Composition is skewed to low complexity over residues 376-392 and 428-439; these read SLEG…RVSS and AEAAAEASPGRA.

The polypeptide is Coiled-coil domain-containing protein 166 (CCDC166) (Homo sapiens (Human)).